A 259-amino-acid chain; its full sequence is Snake venom serine proteinase 2 (259 aa).

An N-terminal signal peptide occupies residues 1–18 (MVLIRVLANLLILQLSYA). Positions 19–24 (QKSSEL) are excised as a propeptide. A Peptidase S1 domain is found at 25–250 (IFGGRPCNRN…HLDWIQSIIA (226 aa)). 6 disulfides stabilise this stretch: Cys-31-Cys-162, Cys-49-Cys-65, Cys-97-Cys-257, Cys-141-Cys-211, Cys-173-Cys-190, and Cys-201-Cys-226. Residues His-64 and Asp-109 each act as charge relay system in the active site. The active-site Charge relay system is Ser-205.

This sequence belongs to the peptidase S1 family. Snake venom subfamily. In terms of assembly, monomer. In terms of tissue distribution, expressed by the venom gland.

The protein localises to the secreted. Snake venom serine protease that may act in the hemostasis system of the prey. This Crotalus adamanteus (Eastern diamondback rattlesnake) protein is Snake venom serine proteinase 2.